A 334-amino-acid chain; its full sequence is S-adenosylmethionine decarboxylase proenzyme 1 (334 aa).

Substrate is bound at residue phenylalanine 7. Catalysis depends on residues glutamate 8 and glutamate 11. Glutamate 67 lines the substrate pocket. The active-site Schiff-base intermediate with substrate; via pyruvic acid is the serine 68. Position 68 is a pyruvic acid (Ser); by autocatalysis (serine 68). Cysteine 82 serves as the catalytic Proton donor; for catalytic activity. Phenylalanine 223 contacts substrate. Residues serine 229 and histidine 243 each act as proton acceptor; for processing activity in the active site. Substrate is bound at residue glutamate 247. Serine 298 bears the Phosphoserine mark.

This sequence belongs to the eukaryotic AdoMetDC family. As to quaternary structure, heterotetramer of two alpha and two beta chains. It depends on pyruvate as a cofactor. Post-translationally, is synthesized initially as an inactive proenzyme. Formation of the active enzyme involves a self-maturation process in which the active site pyruvoyl group is generated from an internal serine residue via an autocatalytic post-translational modification. Two non-identical subunits are generated from the proenzyme in this reaction, and the pyruvate is formed at the N-terminus of the alpha chain, which is derived from the carboxyl end of the proenzyme. The post-translation cleavage follows an unusual pathway, termed non-hydrolytic serinolysis, in which the side chain hydroxyl group of the serine supplies its oxygen atom to form the C-terminus of the beta chain, while the remainder of the serine residue undergoes an oxidative deamination to produce ammonia and the pyruvoyl group blocking the N-terminus of the alpha chain. As to expression, expressed in embryonic stem cells; subsequently down-regulated in differentiating neural precursor cells.

It catalyses the reaction S-adenosyl-L-methionine + H(+) = S-adenosyl 3-(methylsulfanyl)propylamine + CO2. Its pathway is amine and polyamine biosynthesis; S-adenosylmethioninamine biosynthesis; S-adenosylmethioninamine from S-adenosyl-L-methionine: step 1/1. Essential for biosynthesis of the polyamines spermidine and spermine. Promotes maintenance and self-renewal of embryonic stem cells, by maintaining spermine levels. In Mus musculus (Mouse), this protein is S-adenosylmethionine decarboxylase proenzyme 1 (Amd1).